The following is a 377-amino-acid chain: Queuine tRNA-ribosyltransferase (377 aa).

The active-site Proton acceptor is aspartate 94. Substrate contacts are provided by residues 94-98 (DSGGF), aspartate 148, glutamine 191, and glycine 218. An RNA binding region spans residues 249–255 (GVGTPDD). The active-site Nucleophile is the aspartate 268. Residues 273 to 277 (TRAGR) form an RNA binding; important for wobble base 34 recognition region.

Belongs to the queuine tRNA-ribosyltransferase family. Homodimer. Within each dimer, one monomer is responsible for RNA recognition and catalysis, while the other monomer binds to the replacement base PreQ1.

The enzyme catalyses 7-aminomethyl-7-carbaguanine + guanosine(34) in tRNA = 7-aminomethyl-7-carbaguanosine(34) in tRNA + guanine. The protein operates within tRNA modification; tRNA-queuosine biosynthesis. Functionally, catalyzes the base-exchange of a guanine (G) residue with the queuine precursor 7-aminomethyl-7-deazaguanine (PreQ1) at position 34 (anticodon wobble position) in tRNAs with GU(N) anticodons (tRNA-Asp, -Asn, -His and -Tyr). Catalysis occurs through a double-displacement mechanism. The nucleophile active site attacks the C1' of nucleotide 34 to detach the guanine base from the RNA, forming a covalent enzyme-RNA intermediate. The proton acceptor active site deprotonates the incoming PreQ1, allowing a nucleophilic attack on the C1' of the ribose to form the product. After dissociation, two additional enzymatic reactions on the tRNA convert PreQ1 to queuine (Q), resulting in the hypermodified nucleoside queuosine (7-(((4,5-cis-dihydroxy-2-cyclopenten-1-yl)amino)methyl)-7-deazaguanosine). The polypeptide is Queuine tRNA-ribosyltransferase (Brucella suis biovar 1 (strain 1330)).